The sequence spans 204 residues: Holliday junction branch migration complex subunit RuvA (204 aa).

Residues 1–63 (MIGKLSGKAD…EEHIHLYGFL (63 aa)) form a domain I region. Positions 64-142 (TLEEKNFFNL…KISSSSAIKD (79 aa)) are domain II. Positions 143-153 (SLNIKNITPVT) are flexible linker. Positions 153–204 (TSNEVMKALINLGFSRFEAQNVVQGIITQNPKISIDELIKTALKNRNSKFFS) are domain III.

It belongs to the RuvA family. In terms of assembly, homotetramer. Forms an RuvA(8)-RuvB(12)-Holliday junction (HJ) complex. HJ DNA is sandwiched between 2 RuvA tetramers; dsDNA enters through RuvA and exits via RuvB. An RuvB hexamer assembles on each DNA strand where it exits the tetramer. Each RuvB hexamer is contacted by two RuvA subunits (via domain III) on 2 adjacent RuvB subunits; this complex drives branch migration. In the full resolvosome a probable DNA-RuvA(4)-RuvB(12)-RuvC(2) complex forms which resolves the HJ.

Its subcellular location is the cytoplasm. The RuvA-RuvB-RuvC complex processes Holliday junction (HJ) DNA during genetic recombination and DNA repair, while the RuvA-RuvB complex plays an important role in the rescue of blocked DNA replication forks via replication fork reversal (RFR). RuvA specifically binds to HJ cruciform DNA, conferring on it an open structure. The RuvB hexamer acts as an ATP-dependent pump, pulling dsDNA into and through the RuvAB complex. HJ branch migration allows RuvC to scan DNA until it finds its consensus sequence, where it cleaves and resolves the cruciform DNA. The sequence is that of Holliday junction branch migration complex subunit RuvA from Rickettsia canadensis (strain McKiel).